The following is a 350-amino-acid chain: Methionine import ATP-binding protein MetN (350 aa).

Positions 2 to 241 (IQIKNLKKEY…PQAPVTRSFV (240 aa)) constitute an ABC transporter domain. 38 to 45 (GHSGAGKS) contributes to the ATP binding site.

It belongs to the ABC transporter superfamily. Methionine importer (TC 3.A.1.24) family. The complex is composed of two ATP-binding proteins (MetN), two transmembrane proteins (MetI) and a solute-binding protein (MetQ).

Its subcellular location is the cell inner membrane. It catalyses the reaction L-methionine(out) + ATP + H2O = L-methionine(in) + ADP + phosphate + H(+). The enzyme catalyses D-methionine(out) + ATP + H2O = D-methionine(in) + ADP + phosphate + H(+). In terms of biological role, part of the ABC transporter complex MetNIQ involved in methionine import. Responsible for energy coupling to the transport system. The polypeptide is Methionine import ATP-binding protein MetN (Francisella tularensis subsp. tularensis (strain FSC 198)).